The primary structure comprises 848 residues: Dynein axonemal intermediate chain 4 (848 aa).

Disordered regions lie at residues 345–370 and 431–464; these read SKANVLPKDQDQRLPGSTTEKNSETS and EPEPEEPEDVLESAKHEEVEEESKKEEEEEIHAE. Residues 359–370 are compositionally biased toward polar residues; sequence PGSTTEKNSETS. A compositionally biased stretch (basic and acidic residues) spans 442–456; sequence ESAKHEEVEEESKKE. 6 WD repeats span residues 534 to 574, 583 to 631, 658 to 698, 702 to 742, 745 to 784, and 790 to 829; these read QSPY…NVPV, KHLG…DCYD, SRQA…QYLD, GHKG…PSLS, PATSVVYDVAWSPKSSYIFAAANENRVEIWDLHISTLDPL, and NPGIKFTTILFAKQTDCLLVGDSDGQVSVYELRNMPTVLE.

Part of the multisubunit axonemal dynein complex formed at least of two heavy chains and a number of intermediate and light chains. Associated with axonemal dynein subunits such as, DNAH2, DNAI3, and DYNLT1. Interacts with DYNLT1.

It is found in the cytoplasm. Its subcellular location is the cytoskeleton. The protein resides in the flagellum axoneme. It localises to the cilium axoneme. The protein localises to the dynein axonemal particle. Its function is as follows. Plays a critical role in the assembly of axonemal dynein complex, thereby playing a role in ciliary motility. This Homo sapiens (Human) protein is Dynein axonemal intermediate chain 4.